A 101-amino-acid polypeptide reads, in one-letter code: Urinary protein 2 (101 aa).

The signal sequence occupies residues 1-21 (MGKHILLLPLGLSLLMSSLLA). The 78-residue stretch at 22–99 (LQCFRCTSFD…CSATPFCNMV (78 aa)) folds into the UPAR/Ly6 domain. Cystine bridges form between C24-C51, C27-C36, C43-C70, C73-C89, and C90-C96. N-linked (GlcNAc...) asparagine glycosylation is found at N67 and N74.

Post-translationally, N-glycosylated.

It localises to the secreted. In Rattus norvegicus (Rat), this protein is Urinary protein 2.